Consider the following 232-residue polypeptide: Ribose-5-phosphate isomerase A (232 aa).

Residues 31 to 34, 87 to 90, and 100 to 103 each bind substrate; these read TGST, DGAD, and KGGG. Residue glutamate 109 is the Proton acceptor of the active site. Substrate is bound at residue lysine 127.

This sequence belongs to the ribose 5-phosphate isomerase family. In terms of assembly, homodimer.

It carries out the reaction aldehydo-D-ribose 5-phosphate = D-ribulose 5-phosphate. The protein operates within carbohydrate degradation; pentose phosphate pathway; D-ribose 5-phosphate from D-ribulose 5-phosphate (non-oxidative stage): step 1/1. Catalyzes the reversible conversion of ribose-5-phosphate to ribulose 5-phosphate. This is Ribose-5-phosphate isomerase A from Bifidobacterium longum (strain DJO10A).